Consider the following 361-residue polypeptide: 3-dehydroquinate synthase (361 aa).

NAD(+) is bound by residues 106–110 (GVVGD), 130–131 (TT), K143, and K152. The Zn(2+) site is built by E185, H247, and H264.

Belongs to the sugar phosphate cyclases superfamily. Dehydroquinate synthase family. It depends on NAD(+) as a cofactor. The cofactor is Co(2+). Requires Zn(2+) as cofactor.

The protein resides in the cytoplasm. The enzyme catalyses 7-phospho-2-dehydro-3-deoxy-D-arabino-heptonate = 3-dehydroquinate + phosphate. It participates in metabolic intermediate biosynthesis; chorismate biosynthesis; chorismate from D-erythrose 4-phosphate and phosphoenolpyruvate: step 2/7. Functionally, catalyzes the conversion of 3-deoxy-D-arabino-heptulosonate 7-phosphate (DAHP) to dehydroquinate (DHQ). This Gloeobacter violaceus (strain ATCC 29082 / PCC 7421) protein is 3-dehydroquinate synthase.